A 648-amino-acid polypeptide reads, in one-letter code: Macrolide export ATP-binding/permease protein MacB (648 aa).

The ABC transporter domain maps to 6–251 (IRVRGVSRAF…GPSAGWRGAI (246 aa)). 42–49 (GASGSGKS) is a binding site for ATP. 4 helical membrane passes run 273–293 (LLTM…SALG), 528–548 (VAVI…LVSV), 572–592 (FLIE…MLAL), and 613–633 (SIIV…FLPA).

The protein belongs to the ABC transporter superfamily. Macrolide exporter (TC 3.A.1.122) family. In terms of assembly, homodimer.

It localises to the cell inner membrane. In terms of biological role, non-canonical ABC transporter that contains transmembrane domains (TMD), which form a pore in the inner membrane, and an ATP-binding domain (NBD), which is responsible for energy generation. Confers resistance against macrolides. The chain is Macrolide export ATP-binding/permease protein MacB from Agrobacterium fabrum (strain C58 / ATCC 33970) (Agrobacterium tumefaciens (strain C58)).